A 330-amino-acid polypeptide reads, in one-letter code: Beta-ketoacyl-[acyl-carrier-protein] synthase III (330 aa).

Catalysis depends on residues C114 and H257. The segment at 258–262 is ACP-binding; the sequence is QANLR. N287 is a catalytic residue.

The protein belongs to the thiolase-like superfamily. FabH family. As to quaternary structure, homodimer.

The protein resides in the cytoplasm. It carries out the reaction malonyl-[ACP] + acetyl-CoA + H(+) = 3-oxobutanoyl-[ACP] + CO2 + CoA. The protein operates within lipid metabolism; fatty acid biosynthesis. Functionally, catalyzes the condensation reaction of fatty acid synthesis by the addition to an acyl acceptor of two carbons from malonyl-ACP. Catalyzes the first condensation reaction which initiates fatty acid synthesis and may therefore play a role in governing the total rate of fatty acid production. Possesses both acetoacetyl-ACP synthase and acetyl transacylase activities. Its substrate specificity determines the biosynthesis of branched-chain and/or straight-chain of fatty acids. This is Beta-ketoacyl-[acyl-carrier-protein] synthase III from Nitratidesulfovibrio vulgaris (strain ATCC 29579 / DSM 644 / CCUG 34227 / NCIMB 8303 / VKM B-1760 / Hildenborough) (Desulfovibrio vulgaris).